We begin with the raw amino-acid sequence, 432 residues long: MAKPAYKVADISLAEFGRKEIVLAENEMPGLMACRQKYGPLKILKGARIAGCLHMTIQTAVLIETLIELGAEVQWSSCNIFSTQDHAAAAMAKAGVPVYAWKGETDEEYMWCIRQTLIFPDGKPLNMILDDGGDLTNLVHAEHPELLKEIRGLSEETTTGVHNLYKMFREGRLGMPAINVNDSVTKSKFDNLYGCRESLLDGIKRATDVMIAGKVCVVAGYGDVGKGCAQALRGSGGRVLITEIDPINALQAAMEGYEVTTMEEASKEAQIFVTTTGCTDIIMGEHFLNMKDDSIVCNIGHFDCEINVTWLQENAVEKVNIKPQVDRYRLANGNHIILLAEGRLVNLGCAMGHSSFVMSNSFTNQVLAQIELWTNREQYAIGVHVLPKKLDEEVAALHLDKLGVKLTKLSARQAEYLNLPAEGPYKPEHYRY.

Positions 56, 131, and 156 each coordinate substrate. Threonine 157–threonine 159 lines the NAD(+) pocket. Substrate is bound by residues lysine 186 and aspartate 190. NAD(+) contacts are provided by residues asparagine 191, glycine 222–glycine 227, glutamate 243, isoleucine 299–histidine 301, and asparagine 346.

Belongs to the adenosylhomocysteinase family. Requires NAD(+) as cofactor.

The enzyme catalyses S-adenosyl-L-homocysteine + H2O = L-homocysteine + adenosine. The protein operates within amino-acid biosynthesis; L-homocysteine biosynthesis; L-homocysteine from S-adenosyl-L-homocysteine: step 1/1. In terms of biological role, adenosylhomocysteine is a competitive inhibitor of S-adenosyl-L-methionine-dependent methyl transferase reactions; therefore adenosylhomocysteinase may play a key role in the control of methylations via regulation of the intracellular concentration of adenosylhomocysteine. The chain is Adenosylhomocysteinase (Ahcy13) from Anopheles gambiae (African malaria mosquito).